Consider the following 485-residue polypeptide: Aspartyl/glutamyl-tRNA(Asn/Gln) amidotransferase subunit B (485 aa).

It belongs to the GatB/GatE family. GatB subfamily. Heterotrimer of A, B and C subunits.

It catalyses the reaction L-glutamyl-tRNA(Gln) + L-glutamine + ATP + H2O = L-glutaminyl-tRNA(Gln) + L-glutamate + ADP + phosphate + H(+). It carries out the reaction L-aspartyl-tRNA(Asn) + L-glutamine + ATP + H2O = L-asparaginyl-tRNA(Asn) + L-glutamate + ADP + phosphate + 2 H(+). Functionally, allows the formation of correctly charged Asn-tRNA(Asn) or Gln-tRNA(Gln) through the transamidation of misacylated Asp-tRNA(Asn) or Glu-tRNA(Gln) in organisms which lack either or both of asparaginyl-tRNA or glutaminyl-tRNA synthetases. The reaction takes place in the presence of glutamine and ATP through an activated phospho-Asp-tRNA(Asn) or phospho-Glu-tRNA(Gln). This is Aspartyl/glutamyl-tRNA(Asn/Gln) amidotransferase subunit B from Paramagnetospirillum magneticum (strain ATCC 700264 / AMB-1) (Magnetospirillum magneticum).